Consider the following 201-residue polypeptide: tRNA (guanine-N(7)-)-methyltransferase (201 aa).

S-adenosyl-L-methionine is bound by residues E33, E58, D85, and D106. D106 is an active-site residue. Substrate contacts are provided by residues K110, D142, and 180–183; that span reads TTYE.

The protein belongs to the class I-like SAM-binding methyltransferase superfamily. TrmB family.

The enzyme catalyses guanosine(46) in tRNA + S-adenosyl-L-methionine = N(7)-methylguanosine(46) in tRNA + S-adenosyl-L-homocysteine. The protein operates within tRNA modification; N(7)-methylguanine-tRNA biosynthesis. Functionally, catalyzes the formation of N(7)-methylguanine at position 46 (m7G46) in tRNA. The protein is tRNA (guanine-N(7)-)-methyltransferase of Mesomycoplasma hyopneumoniae (strain J / ATCC 25934 / NCTC 10110) (Mycoplasma hyopneumoniae).